Reading from the N-terminus, the 576-residue chain is Arginine--tRNA ligase (576 aa).

Positions 122–132 (PNVAKQMHVGH) match the 'HIGH' region motif.

Belongs to the class-I aminoacyl-tRNA synthetase family. As to quaternary structure, monomer.

It is found in the cytoplasm. It carries out the reaction tRNA(Arg) + L-arginine + ATP = L-arginyl-tRNA(Arg) + AMP + diphosphate. In Yersinia pestis bv. Antiqua (strain Antiqua), this protein is Arginine--tRNA ligase.